The primary structure comprises 363 residues: UDP-N-acetylglucosamine--N-acetylmuramyl-(pentapeptide) pyrophosphoryl-undecaprenol N-acetylglucosamine transferase (363 aa).

UDP-N-acetyl-alpha-D-glucosamine contacts are provided by residues 10-12, asparagine 124, serine 195, isoleucine 250, and glutamine 295; that span reads TGG.

This sequence belongs to the glycosyltransferase 28 family. MurG subfamily.

Its subcellular location is the cell membrane. It catalyses the reaction di-trans,octa-cis-undecaprenyl diphospho-N-acetyl-alpha-D-muramoyl-L-alanyl-D-glutamyl-meso-2,6-diaminopimeloyl-D-alanyl-D-alanine + UDP-N-acetyl-alpha-D-glucosamine = di-trans,octa-cis-undecaprenyl diphospho-[N-acetyl-alpha-D-glucosaminyl-(1-&gt;4)]-N-acetyl-alpha-D-muramoyl-L-alanyl-D-glutamyl-meso-2,6-diaminopimeloyl-D-alanyl-D-alanine + UDP + H(+). It participates in cell wall biogenesis; peptidoglycan biosynthesis. In terms of biological role, cell wall formation. Catalyzes the transfer of a GlcNAc subunit on undecaprenyl-pyrophosphoryl-MurNAc-pentapeptide (lipid intermediate I) to form undecaprenyl-pyrophosphoryl-MurNAc-(pentapeptide)GlcNAc (lipid intermediate II). The polypeptide is UDP-N-acetylglucosamine--N-acetylmuramyl-(pentapeptide) pyrophosphoryl-undecaprenol N-acetylglucosamine transferase (Listeria monocytogenes serovar 1/2a (strain ATCC BAA-679 / EGD-e)).